Reading from the N-terminus, the 478-residue chain is Isoeugenol monooxygenase (478 aa).

Positions 167, 218, 282, and 471 each coordinate Fe cation.

This sequence belongs to the carotenoid oxygenase family. Monomer. Fe(2+) is required as a cofactor.

It catalyses the reaction (E)-isoeugenol + O2 = vanillin + acetaldehyde. With respect to regulation, inhibited by HgCl(2), AgNO(3), CuCl(2), phenylhydrazine, 8-hydroxyquinoline, R-cycloserine and p-chloromercuribenzoic acid. Functionally, involved in isoeugenol degradation. Catalyzes the oxidative cleavage of the side chain double-bond of isoeugenol to form vanillin and acetaldehyde. This chain is Isoeugenol monooxygenase, found in Pseudomonas putida (Arthrobacter siderocapsulatus).